A 255-amino-acid polypeptide reads, in one-letter code: ATP synthase subunit a (255 aa).

Helical transmembrane passes span 28–48 (VDSLIMSFSLGALFCYLFWLG), 86–106 (IAPLALTIFCWIFLMNLMDLV), 125–145 (ILPTVDLNVTFALSISVFFLI), 164–184 (FHPFGPWLLPFNLILNIIELI), 203–223 (LIFILISLLPWWIQWALGTPW), and 224–244 (AIFHILVIPLQAFIFMMLTVV).

Belongs to the ATPase A chain family. In terms of assembly, F-type ATPases have 2 components, CF(1) - the catalytic core - and CF(0) - the membrane proton channel. CF(1) has five subunits: alpha(3), beta(3), gamma(1), delta(1), epsilon(1). CF(0) has three main subunits: a(1), b(2) and c(9-12). The alpha and beta chains form an alternating ring which encloses part of the gamma chain. CF(1) is attached to CF(0) by a central stalk formed by the gamma and epsilon chains, while a peripheral stalk is formed by the delta and b chains.

The protein localises to the cell inner membrane. In terms of biological role, key component of the proton channel; it plays a direct role in the translocation of protons across the membrane. The polypeptide is ATP synthase subunit a (Alkalilimnicola ehrlichii (strain ATCC BAA-1101 / DSM 17681 / MLHE-1)).